The following is a 381-amino-acid chain: Cytochrome b (381 aa).

4 consecutive transmembrane segments (helical) span residues 34 to 54 (FGSL…FLAM), 78 to 99 (WLIR…YLHI), 114 to 134 (WNIG…GYVL), and 179 to 199 (FFAF…IHLL). Residues His-84 and His-98 each coordinate heme b. Heme b is bound by residues His-183 and His-197. An a ubiquinone-binding site is contributed by His-202. The next 4 membrane-spanning stretches (helical) occupy residues 227–247 (YKDL…ALFM), 289–309 (LGGV…PLLH), 321–341 (MTQI…WIGG), and 348–368 (FIMV…IIMP).

It belongs to the cytochrome b family. As to quaternary structure, the cytochrome bc1 complex contains 3 respiratory subunits (MT-CYB, CYC1 and UQCRFS1), 2 core proteins (UQCRC1 and UQCRC2) and probably 6 low-molecular weight proteins. Heme b serves as cofactor.

The protein localises to the mitochondrion inner membrane. Component of the ubiquinol-cytochrome c reductase complex (complex III or cytochrome b-c1 complex) that is part of the mitochondrial respiratory chain. The b-c1 complex mediates electron transfer from ubiquinol to cytochrome c. Contributes to the generation of a proton gradient across the mitochondrial membrane that is then used for ATP synthesis. The polypeptide is Cytochrome b (mt-cyb) (Carcharhinus plumbeus (Sandbar shark)).